A 177-amino-acid chain; its full sequence is Cyclic pyranopterin monophosphate synthase (177 aa).

Substrate is bound by residues 89–91 (LCH) and 125–126 (ME). Asp140 is a catalytic residue.

Belongs to the MoaC family. As to quaternary structure, homohexamer; trimer of dimers.

It carries out the reaction (8S)-3',8-cyclo-7,8-dihydroguanosine 5'-triphosphate = cyclic pyranopterin phosphate + diphosphate. Its pathway is cofactor biosynthesis; molybdopterin biosynthesis. Functionally, catalyzes the conversion of (8S)-3',8-cyclo-7,8-dihydroguanosine 5'-triphosphate to cyclic pyranopterin monophosphate (cPMP). The sequence is that of Cyclic pyranopterin monophosphate synthase from Streptomyces griseus subsp. griseus (strain JCM 4626 / CBS 651.72 / NBRC 13350 / KCC S-0626 / ISP 5235).